A 292-amino-acid chain; its full sequence is UPF0696 protein C11orf68 homolog (292 aa).

Residues 1-10 (MAAAAAAVAG) show a composition bias toward low complexity. The tract at residues 1–60 (MAAAAAAVAGAGRGGGGGAEPRQERSRARGWAGAERSEGRRMEPGEELEEEDSPGGREDG) is disordered. Residues 35-44 (ERSEGRRMEP) are compositionally biased toward basic and acidic residues.

It belongs to the UPF0696 family.

This is UPF0696 protein C11orf68 homolog from Bos taurus (Bovine).